A 309-amino-acid polypeptide reads, in one-letter code: uncharacterized protein (309 aa).

This sequence to S.pombe SpAC14C4.04.

This is an uncharacterized protein from Schizosaccharomyces pombe (strain 972 / ATCC 24843) (Fission yeast).